Reading from the N-terminus, the 642-residue chain is Threonine--tRNA ligase (642 aa).

Residues 1–61 (MPIITLPDGS…EEDASLEIIT (61 aa)) form the TGS domain. The interval 244–535 (DHRKIGKQLD…LIEEYAGFFP (292 aa)) is catalytic. Residues Cys335, His386, and His512 each contribute to the Zn(2+) site.

This sequence belongs to the class-II aminoacyl-tRNA synthetase family. In terms of assembly, homodimer. Requires Zn(2+) as cofactor.

The protein localises to the cytoplasm. The catalysed reaction is tRNA(Thr) + L-threonine + ATP = L-threonyl-tRNA(Thr) + AMP + diphosphate + H(+). Functionally, catalyzes the attachment of threonine to tRNA(Thr) in a two-step reaction: L-threonine is first activated by ATP to form Thr-AMP and then transferred to the acceptor end of tRNA(Thr). Also edits incorrectly charged L-seryl-tRNA(Thr). The protein is Threonine--tRNA ligase of Vibrio vulnificus (strain CMCP6).